The chain runs to 493 residues: Ketol-acid reductoisomerase (NADP(+)) (493 aa).

One can recognise a KARI N-terminal Rossmann domain in the interval 14 to 208 (LDQLGRCRFM…GGHRAGVLES (195 aa)). NADP(+)-binding positions include 45-48 (CGAQ), R68, R76, S78, and 108-110 (DKQ). The active site involves H132. An NADP(+)-binding site is contributed by G158. KARI C-terminal knotted domains follow at residues 209 to 345 (SFVA…APKG) and 346 to 486 (ENIK…MTDM). Residues D217, E221, E390, and E394 each coordinate Mg(2+). S415 contributes to the substrate binding site.

This sequence belongs to the ketol-acid reductoisomerase family. Mg(2+) is required as a cofactor.

The catalysed reaction is (2R)-2,3-dihydroxy-3-methylbutanoate + NADP(+) = (2S)-2-acetolactate + NADPH + H(+). The enzyme catalyses (2R,3R)-2,3-dihydroxy-3-methylpentanoate + NADP(+) = (S)-2-ethyl-2-hydroxy-3-oxobutanoate + NADPH + H(+). It participates in amino-acid biosynthesis; L-isoleucine biosynthesis; L-isoleucine from 2-oxobutanoate: step 2/4. Its pathway is amino-acid biosynthesis; L-valine biosynthesis; L-valine from pyruvate: step 2/4. Its function is as follows. Involved in the biosynthesis of branched-chain amino acids (BCAA). Catalyzes an alkyl-migration followed by a ketol-acid reduction of (S)-2-acetolactate (S2AL) to yield (R)-2,3-dihydroxy-isovalerate. In the isomerase reaction, S2AL is rearranged via a Mg-dependent methyl migration to produce 3-hydroxy-3-methyl-2-ketobutyrate (HMKB). In the reductase reaction, this 2-ketoacid undergoes a metal-dependent reduction by NADPH to yield (R)-2,3-dihydroxy-isovalerate. This chain is Ketol-acid reductoisomerase (NADP(+)), found in Histophilus somni (strain 129Pt) (Haemophilus somnus).